The chain runs to 312 residues: Olfactory receptor-like protein COR6 (312 aa).

Over 1–26 the chain is Extracellular; sequence MASGNCTTPTTFILSGLTDNPGLQMP. The N-linked (GlcNAc...) asparagine glycan is linked to N5. A helical membrane pass occupies residues 27 to 49; sequence LFMVFLAIYTITLLTNLGLIALI. The Cytoplasmic portion of the chain corresponds to 50–57; the sequence is SIDLQLQT. Residues 58 to 79 form a helical membrane-spanning segment; it reads PMYIFLQNLSFTDAVYSTVITP. Topologically, residues 80 to 100 are extracellular; that stretch reads KMLATFLEETKTISYVGCILQ. C97 and C179 are disulfide-bonded. The helical transmembrane segment at 101 to 120 threads the bilayer; sequence YFSFVLLTVRECLLLAVMAY. The Cytoplasmic segment spans residues 121–139; the sequence is DRYAAICKPLLYPAIMTKA. The helical transmembrane segment at 140 to 164 threads the bilayer; it reads VCWRLVKGLYSLAFLNFLVHTSGLL. Over 165–205 the chain is Extracellular; that stretch reads KLSFCSSNVVNHFFCDNSPLFQISSSSTALNELLVFIFGSL. A helical membrane pass occupies residues 206–226; sequence FVMSSIITILISYVFIILTVV. Residues 227–239 lie on the Cytoplasmic side of the membrane; sequence RIRSKERKYKAFS. Residues 240 to 260 form a helical membrane-spanning segment; sequence TCTSHLMAVSLFHGTIVFMYF. Topologically, residues 261–271 are extracellular; it reads QPANNFSLDKD. The helical transmembrane segment at 272-292 threads the bilayer; that stretch reads KIMSLFYTVVIPMLNPLIYSW. Topologically, residues 293-312 are cytoplasmic; sequence RNKEVKDALHRAIATAVLFH.

It belongs to the G-protein coupled receptor 1 family.

Its subcellular location is the cell membrane. Its function is as follows. Odorant receptor. The sequence is that of Olfactory receptor-like protein COR6 (COR6) from Gallus gallus (Chicken).